The following is a 329-amino-acid chain: Beta-ketoacyl-[acyl-carrier-protein] synthase III (329 aa).

Catalysis depends on residues cysteine 123 and histidine 256. Positions 257–261 (QANVR) are ACP-binding. The active site involves asparagine 286.

This sequence belongs to the thiolase-like superfamily. FabH family. Homodimer.

The protein localises to the cytoplasm. The enzyme catalyses malonyl-[ACP] + acetyl-CoA + H(+) = 3-oxobutanoyl-[ACP] + CO2 + CoA. It functions in the pathway lipid metabolism; fatty acid biosynthesis. Functionally, catalyzes the condensation reaction of fatty acid synthesis by the addition to an acyl acceptor of two carbons from malonyl-ACP. Catalyzes the first condensation reaction which initiates fatty acid synthesis and may therefore play a role in governing the total rate of fatty acid production. Possesses both acetoacetyl-ACP synthase and acetyl transacylase activities. Its substrate specificity determines the biosynthesis of branched-chain and/or straight-chain of fatty acids. This is Beta-ketoacyl-[acyl-carrier-protein] synthase III from Bordetella parapertussis (strain 12822 / ATCC BAA-587 / NCTC 13253).